Here is a 207-residue protein sequence, read N- to C-terminus: MEAFTVVEAVVAPLDRPNVDTDAIIPKQFLKTIERKGLGKHLFDAWRYLERDGKQVNNPDFVLNQPAYAGAQILLARENFGCGSSREHAPWALADYGFRAVIAPSFADIFANNCVQNGILLVRLPMDVVDHLFHEVAANPGYRLRIDLPAQEVQTMGDSRYAFPMDAGHKHKLMHGLDDIQLTLQRDNAIRVYEARRRQTAPWLFRD.

The protein belongs to the LeuD family. LeuD type 1 subfamily. As to quaternary structure, heterodimer of LeuC and LeuD.

The catalysed reaction is (2R,3S)-3-isopropylmalate = (2S)-2-isopropylmalate. The protein operates within amino-acid biosynthesis; L-leucine biosynthesis; L-leucine from 3-methyl-2-oxobutanoate: step 2/4. Catalyzes the isomerization between 2-isopropylmalate and 3-isopropylmalate, via the formation of 2-isopropylmaleate. This chain is 3-isopropylmalate dehydratase small subunit, found in Acidithiobacillus ferrooxidans (strain ATCC 23270 / DSM 14882 / CIP 104768 / NCIMB 8455) (Ferrobacillus ferrooxidans (strain ATCC 23270)).